The following is a 76-amino-acid chain: Neuromacin-like protein (76 aa).

4 disulfides stabilise this stretch: cysteine 18–cysteine 25, cysteine 40–cysteine 44, cysteine 54–cysteine 61, and cysteine 72–cysteine 74.

The protein belongs to the macin family.

The protein resides in the secreted. The polypeptide is Neuromacin-like protein (Aplysia californica (California sea hare)).